The chain runs to 365 residues: Transcription factor KUA1 (365 aa).

Positions 1–21 are disordered; sequence MTRRCSHCNHNGHNSRTCPNR. Residues 3–20 form a CCHC-type zinc finger; sequence RRCSHCNHNGHNSRTCPN. Over residues 8 to 18 the composition is skewed to polar residues; the sequence is CNHNGHNSRTC. Residues 24–28 carry the R/KLFGV (transcriptional repression) motif; sequence KLFGV. The interval 41–99 is disordered; the sequence is MGNLSHYTGSGSGGHGTGSNTPGSPGDVPDHVAGDGYASEDFVAGSSSSRERKKGTPWT. An HTH myb-type domain is found at 90–146; the sequence is RERKKGTPWTEEEHRMFLLGLQKLGKGDWRGISRNYVTTRTPTQVASHAQKYFIRQS. Positions 118–142 form a DNA-binding region, H-T-H motif; sequence WRGISRNYVTTRTPTQVASHAQKYF. 2 disordered regions span residues 214–254 and 321–365; these read SMDS…QPQL and ESNK…IHAL. Residues 220–254 are compositionally biased toward low complexity; the sequence is STTGEPTATAAAASSSSRLEETTQLQSQLQPQPQL. The span at 343–355 shows a compositional bias: polar residues; the sequence is RQSAFHPNPSSDS.

Expressed ubiquitously, except in hypocotyls, root tips and lateral root primordia.

It localises to the nucleus. Transcriptional repressor. Direct regulator of the transcription of peroxidase (Prxs) and reactive oxygen species (ROS)-related genes via the recognition of 5'-ATCACA-3' motif. Binds to 5'-TATCCA-3' motif (TA box) and represses the activity of corresponding promoters (e.g. sugar response genes). Regulates hypocotyl elongation in response to darkness by enhancing auxin accumulation in a phytochrome-interacting factor (PIF) proteins-dependent manner. Promotes lateral roots formation. Promotes cell expansion during leaves development via the modulation of cell wall-located Prxs. Plays a critical role in developmentally regulated and dark-induced onset of leaf senescence by repressing the transcription of several genes involved in chloroplast function and responses to light and auxin. Promotes responses to auxin, abscisic acid (ABA), and ethylene. This Arabidopsis thaliana (Mouse-ear cress) protein is Transcription factor KUA1.